The primary structure comprises 129 residues: Capsid protein (129 aa).

A viral RNA-binding region spans residues 31 to 104 (EWISSNSRSQ…FATNSDCELI (74 aa)).

It belongs to the Leviviricetes capsid protein family. In terms of assembly, homodimer. The capsid proteins form dimers that assemble by group of 5. Twelve such pentamers are linked together with free dimers. The homodimers binds to the viral RNA via an operator hairpin, but also to many other RNA sequences in the viral genome; this interaction probably shifts the virus from the replicative to the assembly phase and ensures specific encapsidation of the viral genome.

It localises to the virion. Functionally, capsid protein self-assembles to form an icosahedral capsid with a T=3 symmetry, about 26 nm in diameter, and consisting of 89 capsid proteins dimers (178 capsid proteins). Involved in viral genome encapsidation through the interaction between a capsid protein dimer and the multiple packaging signals present in the RNA genome. The capsid also contains 1 copy of the A2 maturation protein. Acts as a translational repressor of viral replicase synthesis late in infection. This latter function is the result of capsid protein interaction with an RNA hairpin which contains the replicase ribosome-binding site. This chain is Capsid protein, found in Escherichia coli (Bacteriophage R17).